Reading from the N-terminus, the 604-residue chain is Elongation factor 4 (604 aa).

The 183-residue stretch at 7 to 189 (SRLRNFCIIA…AVVDRIPPPA (183 aa)) folds into the tr-type G domain. GTP is bound by residues 19-24 (DHGKST) and 136-139 (NKID).

This sequence belongs to the TRAFAC class translation factor GTPase superfamily. Classic translation factor GTPase family. LepA subfamily.

The protein localises to the cell inner membrane. It carries out the reaction GTP + H2O = GDP + phosphate + H(+). Functionally, required for accurate and efficient protein synthesis under certain stress conditions. May act as a fidelity factor of the translation reaction, by catalyzing a one-codon backward translocation of tRNAs on improperly translocated ribosomes. Back-translocation proceeds from a post-translocation (POST) complex to a pre-translocation (PRE) complex, thus giving elongation factor G a second chance to translocate the tRNAs correctly. Binds to ribosomes in a GTP-dependent manner. The chain is Elongation factor 4 from Prochlorococcus marinus (strain MIT 9303).